The primary structure comprises 503 residues: Drimenol monooxygenase (503 aa).

The helical transmembrane segment at 7 to 23 (MICIVVSGLLLYSSRTS) threads the bilayer. Heme is bound at residue Ser-471.

It belongs to the cytochrome P450 family. The cofactor is heme.

It localises to the membrane. The enzyme catalyses (5S,9S,10S)-drim-7-en-11-ol + reduced [NADPH--hemoprotein reductase] + O2 = (5S,10S)-(9R)-7-drimene-11,12-diol + oxidized [NADPH--hemoprotein reductase] + H2O + H(+). Its function is as follows. Catalyzes the conversion of drimenol to drimendiol, a precursor of the sesquiterpenoid polygodial. Polygodial has been shown to be an antifeedant for a number of herbivorous insects. The sequence is that of Drimenol monooxygenase from Persicaria hydropiper (Marshpepper knotweed).